Consider the following 499-residue polypeptide: 3-beta-hydroxylase (499 aa).

Residues 2-22 traverse the membrane as a helical; Signal-anchor for type II membrane protein segment; sequence FSSFETLILSFVSLFFMMIFI. C441 contacts heme.

This sequence belongs to the cytochrome P450 family. Heme is required as a cofactor.

The protein resides in the membrane. The enzyme catalyses (+)-costunolide + reduced [NADPH--hemoprotein reductase] + O2 = 3beta-hydroxycostunolide + oxidized [NADPH--hemoprotein reductase] + H2O + H(+). It carries out the reaction parthenolide + reduced [NADPH--hemoprotein reductase] + O2 = 3beta-hydroxyparthenolide + oxidized [NADPH--hemoprotein reductase] + H2O + H(+). Its pathway is secondary metabolite biosynthesis; terpenoid biosynthesis. Its function is as follows. Involved in the biosynthesis of germacrene-derived sesquiterpene lactones. Component of the parthenolide biosynthetic pathway; parthenolide and conjugates are promising anti-cancer drugs highly active against colon cancer cells. Catalyzes the conversion of costunolide and parthenolide to 3-beta-hydroxycostunolide and 3-beta-hydroxyparthenolide, respectively. This chain is 3-beta-hydroxylase, found in Tanacetum parthenium (Feverfew).